A 106-amino-acid polypeptide reads, in one-letter code: Small ribosomal subunit protein uS10 (106 aa).

It belongs to the universal ribosomal protein uS10 family. Part of the 30S ribosomal subunit.

Its function is as follows. Involved in the binding of tRNA to the ribosomes. The chain is Small ribosomal subunit protein uS10 from Mesomycoplasma hyopneumoniae (strain 232) (Mycoplasma hyopneumoniae).